The following is a 385-amino-acid chain: 1-deoxy-D-xylulose 5-phosphate reductoisomerase (385 aa).

NADPH is bound by residues threonine 10, glycine 11, serine 12, isoleucine 13, lysine 37, and asparagine 124. Lysine 125 is a binding site for 1-deoxy-D-xylulose 5-phosphate. Glutamate 126 provides a ligand contact to NADPH. A Mn(2+)-binding site is contributed by aspartate 150. 1-deoxy-D-xylulose 5-phosphate-binding residues include serine 151, glutamate 152, serine 176, and histidine 199. Glutamate 152 contributes to the Mn(2+) binding site. Glycine 205 contributes to the NADPH binding site. The 1-deoxy-D-xylulose 5-phosphate site is built by serine 212, asparagine 217, lysine 218, and glutamate 221. Position 221 (glutamate 221) interacts with Mn(2+).

This sequence belongs to the DXR family. Mg(2+) serves as cofactor. It depends on Mn(2+) as a cofactor.

The catalysed reaction is 2-C-methyl-D-erythritol 4-phosphate + NADP(+) = 1-deoxy-D-xylulose 5-phosphate + NADPH + H(+). Its pathway is isoprenoid biosynthesis; isopentenyl diphosphate biosynthesis via DXP pathway; isopentenyl diphosphate from 1-deoxy-D-xylulose 5-phosphate: step 1/6. Functionally, catalyzes the NADPH-dependent rearrangement and reduction of 1-deoxy-D-xylulose-5-phosphate (DXP) to 2-C-methyl-D-erythritol 4-phosphate (MEP). This chain is 1-deoxy-D-xylulose 5-phosphate reductoisomerase, found in Clostridium botulinum (strain Loch Maree / Type A3).